We begin with the raw amino-acid sequence, 233 residues long: Cytochrome c biogenesis ATP-binding export protein CcmA (233 aa).

Residues 17-233 (FAGEDLLCVR…AAGLFLEDEG (217 aa)) enclose the ABC transporter domain. An ATP-binding site is contributed by 49–56 (GPNGSGKS).

Belongs to the ABC transporter superfamily. CcmA exporter (TC 3.A.1.107) family. The complex is composed of two ATP-binding proteins (CcmA) and two transmembrane proteins (CcmB).

It localises to the cell inner membrane. The enzyme catalyses heme b(in) + ATP + H2O = heme b(out) + ADP + phosphate + H(+). In terms of biological role, part of the ABC transporter complex CcmAB involved in the biogenesis of c-type cytochromes; once thought to export heme, this seems not to be the case, but its exact role is uncertain. Responsible for energy coupling to the transport system. The sequence is that of Cytochrome c biogenesis ATP-binding export protein CcmA from Rhodospirillum rubrum (strain ATCC 11170 / ATH 1.1.1 / DSM 467 / LMG 4362 / NCIMB 8255 / S1).